Consider the following 345-residue polypeptide: MSTDPDEREVSPALTVGDGDVDVSLRPRSLREFIGQPRVREQLQLVIQGAKNRGGTPDHILLSGPPGLGKTSLAMIIAAELGSSLRMTSGPALERAGDLAAMLSNLVEHDVLFIDEIHRIARPAEEMLYLAMEDFRVDVVVGKGPGATSIPLDVAPFTLVGATTRSGALTGPLRDRFGFTAHMDFYEPAELERVLVRSAGILGIQLGADAGAEIARRSRGTPRIANRLLRRVRDFAEVRADGVITRDVAKAALAVYDVDELGLDRLDRAVLSALTRSFSGGPVGVSTLAVAVGEEASTVEEVCEPFLVRAGMVARTPRGRVATALAWTHLGMTPPAGANQPGLFE.

The interval 1 to 186 (MSTDPDEREV…FGFTAHMDFY (186 aa)) is large ATPase domain (RuvB-L). ATP-binding positions include Leu25, Arg26, Gly67, Lys70, Thr71, Ser72, 133-135 (EDF), Arg176, Tyr186, and Arg223. Thr71 lines the Mg(2+) pocket. The small ATPAse domain (RuvB-S) stretch occupies residues 187-257 (EPAELERVLV…VAKAALAVYD (71 aa)). A head domain (RuvB-H) region spans residues 260–345 (ELGLDRLDRA…AGANQPGLFE (86 aa)). DNA contacts are provided by Arg315 and Arg320.

This sequence belongs to the RuvB family. In terms of assembly, homohexamer. Forms an RuvA(8)-RuvB(12)-Holliday junction (HJ) complex. HJ DNA is sandwiched between 2 RuvA tetramers; dsDNA enters through RuvA and exits via RuvB. An RuvB hexamer assembles on each DNA strand where it exits the tetramer. Each RuvB hexamer is contacted by two RuvA subunits (via domain III) on 2 adjacent RuvB subunits; this complex drives branch migration. In the full resolvosome a probable DNA-RuvA(4)-RuvB(12)-RuvC(2) complex forms which resolves the HJ.

It localises to the cytoplasm. The enzyme catalyses ATP + H2O = ADP + phosphate + H(+). Functionally, the RuvA-RuvB-RuvC complex processes Holliday junction (HJ) DNA during genetic recombination and DNA repair, while the RuvA-RuvB complex plays an important role in the rescue of blocked DNA replication forks via replication fork reversal (RFR). RuvA specifically binds to HJ cruciform DNA, conferring on it an open structure. The RuvB hexamer acts as an ATP-dependent pump, pulling dsDNA into and through the RuvAB complex. RuvB forms 2 homohexamers on either side of HJ DNA bound by 1 or 2 RuvA tetramers; 4 subunits per hexamer contact DNA at a time. Coordinated motions by a converter formed by DNA-disengaged RuvB subunits stimulates ATP hydrolysis and nucleotide exchange. Immobilization of the converter enables RuvB to convert the ATP-contained energy into a lever motion, pulling 2 nucleotides of DNA out of the RuvA tetramer per ATP hydrolyzed, thus driving DNA branch migration. The RuvB motors rotate together with the DNA substrate, which together with the progressing nucleotide cycle form the mechanistic basis for DNA recombination by continuous HJ branch migration. Branch migration allows RuvC to scan DNA until it finds its consensus sequence, where it cleaves and resolves cruciform DNA. This is Holliday junction branch migration complex subunit RuvB from Mycobacterium marinum (strain ATCC BAA-535 / M).